The following is a 191-amino-acid chain: Transcription factor FapR (191 aa).

Belongs to the FapR family.

Its function is as follows. Transcriptional factor involved in regulation of membrane lipid biosynthesis by repressing genes involved in fatty acid and phospholipid metabolism. The polypeptide is Transcription factor FapR (Oceanobacillus iheyensis (strain DSM 14371 / CIP 107618 / JCM 11309 / KCTC 3954 / HTE831)).